We begin with the raw amino-acid sequence, 244 residues long: MSLVLLPAVDVVNGEAVRLVQGEAGSETGYGSPRDAALAWQNDGAEWVHLVDLDAAFGRGSNSELLAGVIGDLTVKVELSGGIRDDASLEAALATGCARVNLGTAAIEDPEWCARALAKYGDKIAVGLDVRLVDGQYRTRGRGWVTDGGDLWETLARLDRDGCTRYVVTDVSKDGTLTGPNLELLSQVCAVTDAHVVASGGVSTIEDLLAISSLVDQGVEGAIVGKALYAGRFTLPEALAAVSG.

The active-site Proton acceptor is the Asp-10. Asp-129 functions as the Proton donor in the catalytic mechanism.

The protein belongs to the HisA/HisF family.

The protein localises to the cytoplasm. It catalyses the reaction 1-(5-phospho-beta-D-ribosyl)-5-[(5-phospho-beta-D-ribosylamino)methylideneamino]imidazole-4-carboxamide = 5-[(5-phospho-1-deoxy-D-ribulos-1-ylimino)methylamino]-1-(5-phospho-beta-D-ribosyl)imidazole-4-carboxamide. It functions in the pathway amino-acid biosynthesis; L-histidine biosynthesis; L-histidine from 5-phospho-alpha-D-ribose 1-diphosphate: step 4/9. The sequence is that of 1-(5-phosphoribosyl)-5-[(5-phosphoribosylamino)methylideneamino] imidazole-4-carboxamide isomerase from Rhodococcus erythropolis (strain PR4 / NBRC 100887).